We begin with the raw amino-acid sequence, 704 residues long: Elongation factor G (704 aa).

Positions 8-291 (DRVRNIGIMA…AVIDYLASPV (284 aa)) constitute a tr-type G domain. Residues 17–24 (AHIDAGKT), 90–94 (DTPGH), and 144–147 (NKMD) contribute to the GTP site.

Belongs to the TRAFAC class translation factor GTPase superfamily. Classic translation factor GTPase family. EF-G/EF-2 subfamily.

It localises to the cytoplasm. In terms of biological role, catalyzes the GTP-dependent ribosomal translocation step during translation elongation. During this step, the ribosome changes from the pre-translocational (PRE) to the post-translocational (POST) state as the newly formed A-site-bound peptidyl-tRNA and P-site-bound deacylated tRNA move to the P and E sites, respectively. Catalyzes the coordinated movement of the two tRNA molecules, the mRNA and conformational changes in the ribosome. This is Elongation factor G from Chlorobaculum tepidum (strain ATCC 49652 / DSM 12025 / NBRC 103806 / TLS) (Chlorobium tepidum).